Reading from the N-terminus, the 480-residue chain is 2-phosphoxylose phosphatase 1 (480 aa).

At 1–6 (MLHRNR) the chain is on the cytoplasmic side. Residues 7 to 27 (FLVLLALAGLLAFLSLSLQFF) form a helical; Signal-anchor for type II membrane protein membrane-spanning segment. Residues 28–480 (HLIPVSATKN…YYDACHGEGA (453 aa)) are Lumenal-facing. His97 (nucleophile) is an active-site residue. Asn194, Asn305, and Asn354 each carry an N-linked (GlcNAc...) asparagine glycan. Asp379 acts as the Proton donor in catalysis.

The protein belongs to the histidine acid phosphatase family. As to quaternary structure, interacts with B3GAT3; the interaction increases the 2-phosphoxylose phosphatase activity of PXYLP1 during completion of linkage region formation in a B3GAT3-mediated manner.

It is found in the golgi apparatus membrane. It carries out the reaction 3-O-[beta-D-GlcA-(1-&gt;3)-beta-D-Gal-(1-&gt;3)-beta-D-Gal-(1-&gt;4)-beta-D-2-O-P-Xyl]-L-seryl-[protein] + H2O = 3-O-(beta-D-GlcA-(1-&gt;3)-beta-D-Gal-(1-&gt;3)-beta-D-Gal-(1-&gt;4)-beta-D-Xyl)-L-seryl-[protein] + phosphate. Functionally, responsible for the 2-O-dephosphorylation of xylose in the glycosaminoglycan-protein linkage region of proteoglycans thereby regulating the amount of mature glycosaminoglycan (GAG) chains. Sulfated glycosaminoglycans (GAGs), including heparan sulfate and chondroitin sulfate, are synthesized on the so-called common GAG-protein linkage region (GlcUAbeta1-3Galbeta1-3Galbeta1-4Xylbeta1-O-Ser) of core proteins, which is formed by the stepwise addition of monosaccharide residues by the respective specific glycosyltransferases. Xylose 2-O-dephosphorylation during completion of linkage region formation is a prerequisite for the initiation and efficient elongation of the repeating disaccharide region of GAG chains. The chain is 2-phosphoxylose phosphatase 1 from Mus musculus (Mouse).